Here is a 209-residue protein sequence, read N- to C-terminus: ATP-dependent Clp protease proteolytic subunit 2 (209 aa).

The Nucleophile role is filled by Ser-106. The active site involves His-131.

The protein belongs to the peptidase S14 family. Fourteen ClpP subunits assemble into 2 heptameric rings which stack back to back to give a disk-like structure with a central cavity, resembling the structure of eukaryotic proteasomes.

Its subcellular location is the cytoplasm. The catalysed reaction is Hydrolysis of proteins to small peptides in the presence of ATP and magnesium. alpha-casein is the usual test substrate. In the absence of ATP, only oligopeptides shorter than five residues are hydrolyzed (such as succinyl-Leu-Tyr-|-NHMec, and Leu-Tyr-Leu-|-Tyr-Trp, in which cleavage of the -Tyr-|-Leu- and -Tyr-|-Trp bonds also occurs).. In terms of biological role, cleaves peptides in various proteins in a process that requires ATP hydrolysis. Has a chymotrypsin-like activity. Plays a major role in the degradation of misfolded proteins. The polypeptide is ATP-dependent Clp protease proteolytic subunit 2 (Rhizobium etli (strain ATCC 51251 / DSM 11541 / JCM 21823 / NBRC 15573 / CFN 42)).